A 415-amino-acid chain; its full sequence is Multidrug resistance protein MdtA (415 aa).

The signal sequence occupies residues 1–21 (MKGSYKSRWVIVIVVVIAAIA). Over residues 34–47 (SAAPGATKQAQQSP) the composition is skewed to polar residues. Disordered regions lie at residues 34–60 (SAAPGATKQAQQSPAGGRRGMRSGPLA) and 392–415 (EAQSATTPEEKATSREYAKKGARS). Over residues 399–415 (PEEKATSREYAKKGARS) the composition is skewed to basic and acidic residues.

It belongs to the membrane fusion protein (MFP) (TC 8.A.1) family. In terms of assembly, part of a tripartite efflux system composed of MdtA, MdtB and MdtC.

The protein localises to the cell inner membrane. Its function is as follows. The MdtABC tripartite complex confers resistance against novobiocin and deoxycholate. This chain is Multidrug resistance protein MdtA, found in Escherichia fergusonii (strain ATCC 35469 / DSM 13698 / CCUG 18766 / IAM 14443 / JCM 21226 / LMG 7866 / NBRC 102419 / NCTC 12128 / CDC 0568-73).